We begin with the raw amino-acid sequence, 468 residues long: Glutamate--tRNA ligase (468 aa).

Residues 12-22 (PSPTGFIHLGN) carry the 'HIGH' region motif. A 'KMSKS' region motif is present at residues 244–248 (KMSKR). Lys-247 contacts ATP.

Belongs to the class-I aminoacyl-tRNA synthetase family. Glutamate--tRNA ligase type 1 subfamily. As to quaternary structure, monomer.

Its subcellular location is the cytoplasm. It catalyses the reaction tRNA(Glu) + L-glutamate + ATP = L-glutamyl-tRNA(Glu) + AMP + diphosphate. Catalyzes the attachment of glutamate to tRNA(Glu) in a two-step reaction: glutamate is first activated by ATP to form Glu-AMP and then transferred to the acceptor end of tRNA(Glu). This is Glutamate--tRNA ligase from Polynucleobacter necessarius subsp. necessarius (strain STIR1).